Reading from the N-terminus, the 242-residue chain is Synaptonemal complex central element protein 1-like (242 aa).

A disordered region spans residues 1–24 (MAGKLKPLNVEAPEATEEAEGQAK). A coiled-coil region spans residues 44–181 (LEPQIEDLIS…LREVERRLHS (138 aa)). The tract at residues 206 to 242 (VRSAPEVGAGEGEAGPELPRARDEEDPEPPVAAPDAL) is disordered.

Belongs to the SYCE family.

May be involved in meiosis. This chain is Synaptonemal complex central element protein 1-like (SYCE1L), found in Homo sapiens (Human).